We begin with the raw amino-acid sequence, 101 residues long: Small ribosomal subunit protein uS14 (101 aa).

The protein belongs to the universal ribosomal protein uS14 family. As to quaternary structure, part of the 30S ribosomal subunit. Contacts proteins S3 and S10.

In terms of biological role, binds 16S rRNA, required for the assembly of 30S particles and may also be responsible for determining the conformation of the 16S rRNA at the A site. The sequence is that of Small ribosomal subunit protein uS14 from Acinetobacter baumannii (strain SDF).